Here is a 215-residue protein sequence, read N- to C-terminus: Probable phosphoglycerate mutase GpmB (215 aa).

Substrate contacts are provided by residues 8-15 (RHGETQWN), 21-22 (QG), Arg58, Arg60, 82-85 (ELDM), 104-105 (RR), and 151-152 (GI). His9 acts as the Tele-phosphohistidine intermediate in catalysis. Residue Glu82 is the Proton donor/acceptor of the active site.

It belongs to the phosphoglycerate mutase family. GpmB subfamily.

It carries out the reaction (2R)-2-phosphoglycerate = (2R)-3-phosphoglycerate. It participates in carbohydrate degradation; glycolysis; pyruvate from D-glyceraldehyde 3-phosphate: step 3/5. In Klebsiella pneumoniae (strain 342), this protein is Probable phosphoglycerate mutase GpmB.